The chain runs to 367 residues: MNTTANPSNIIVGLSGGVDSSVTAALLKQQGYQVRGVFMQNWEDDDNDEYCSIKQDSFDAIAVADIVGIDIDIVNFAAQYKDKVFAYFLQEYSAGRTPNPDVLCNAEIKFKCFLDYAVGQGADTIATGHYARKEVRNGVHYLLKGLDQNKDQSYFLYRLKPFQLERAIFPLGGLEKPEVRRLAAEFNLPTAAKKDSTGICFIGERPFREFLQKYLPTDNGKMVTPEGKTVGEHVGLMFYTLGQRKGLGIGGGGEPWFVAAKDLTKNELMVVQGHDHPLLYTRSLVMNDLSFTLPERPKEGHYTCKTRYRMADAPCELRYLDDETVELVFDEPQWAVTPGQSAVLYDGDICLGGGIIQSTDKPVIITR.

ATP contacts are provided by residues 13–20 (GLSGGVDS) and methionine 39. The interaction with target base in tRNA stretch occupies residues 99-101 (NPD). The active-site Nucleophile is cysteine 104. A disulfide bridge connects residues cysteine 104 and cysteine 200. ATP is bound at residue glycine 128. Positions 150 to 152 (KDQ) are interaction with tRNA. Cysteine 200 acts as the Cysteine persulfide intermediate in catalysis. The segment at 307–308 (RY) is interaction with tRNA.

Belongs to the MnmA/TRMU family.

It is found in the cytoplasm. The catalysed reaction is S-sulfanyl-L-cysteinyl-[protein] + uridine(34) in tRNA + AH2 + ATP = 2-thiouridine(34) in tRNA + L-cysteinyl-[protein] + A + AMP + diphosphate + H(+). Functionally, catalyzes the 2-thiolation of uridine at the wobble position (U34) of tRNA, leading to the formation of s(2)U34. The polypeptide is tRNA-specific 2-thiouridylase MnmA (Neisseria meningitidis serogroup A / serotype 4A (strain DSM 15465 / Z2491)).